The following is a 481-amino-acid chain: Protein NRT1/ PTR FAMILY 1.3 (481 aa).

Helical transmembrane passes span 32–52, 57–77, 88–108, 124–144, 173–193, 202–222, 259–279, 302–322, 333–353, 374–394, 422–442, and 451–471; these read LAYF…YGMG, ANIL…GAFI, IGFG…TTII, LLKS…AGGV, FNWY…LLVF, IGFG…FAAS, IWST…FIVL, IFLV…IVPL, LGVM…ISAL, AMWL…NTIA, ASLI…GSWI, and LDYY…YFVW.

The protein belongs to the major facilitator superfamily. Proton-dependent oligopeptide transporter (POT/PTR) (TC 2.A.17) family. Expressed in roots.

It localises to the membrane. This is Protein NRT1/ PTR FAMILY 1.3 (NPF1.3) from Arabidopsis thaliana (Mouse-ear cress).